The sequence spans 331 residues: UPF0194 membrane protein CKO_02332 (331 aa).

Positions 1-15 are cleaved as a signal peptide; it reads MKKPVVIALAVAALA. Residues 142-207 adopt a coiled-coil conformation; that stretch reads ISANDLENAR…ELDLQDTTLI (66 aa).

Belongs to the UPF0194 family.

Its subcellular location is the periplasm. The chain is UPF0194 membrane protein CKO_02332 from Citrobacter koseri (strain ATCC BAA-895 / CDC 4225-83 / SGSC4696).